The sequence spans 68 residues: Gallinacin-10 (68 aa).

A signal peptide spans 1–19; that stretch reads MKILCLLFAVLLFLFQAAP. Positions 20 to 25 are excised as a propeptide; sequence GSADPL. 3 disulfides stabilise this stretch: Cys32/Cys61, Cys39/Cys54, and Cys44/Cys62.

Belongs to the beta-defensin family. In terms of tissue distribution, strong expression in the testis, liver, gall bladder and kidney. Also expressed in the ovary and male and female reproductive tracts. Expressed in the ovarian stroma and the theca and granulosa layers of the ovarian follicle.

The protein resides in the secreted. It localises to the cytoplasmic granule. Functionally, has bactericidal activity. The polypeptide is Gallinacin-10 (GAL10) (Gallus gallus (Chicken)).